A 518-amino-acid polypeptide reads, in one-letter code: Pre-glycoprotein polyprotein GP complex (518 aa).

Gly-2 is lipidated: N-myristoyl glycine; by host. At Gly-2–Glu-17 the chain is on the extracellular side. A helical transmembrane segment spans residues Ala-18–Lys-33. Over Gly-34–Ser-58 the chain is Cytoplasmic. Cys-57 is a Zn(2+) binding site. Topologically, residues His-59–Asp-456 are extracellular. 4 disulfides stabilise this stretch: Cys-87–Cys-258, Cys-303–Cys-316, Cys-325–Cys-334, and Cys-388–Cys-409. Asn-90, Asn-112, Asn-127, Asn-180, and Asn-251 each carry an N-linked (GlcNAc...) asparagine; by host glycan. 4 N-linked (GlcNAc...) asparagine; by host glycosylation sites follow: Asn-389, Asn-397, Asn-414, and Asn-419. A helical membrane pass occupies residues Leu-457 to Pro-477. Residues Thr-478 to Arg-518 lie on the Cytoplasmic side of the membrane. Zn(2+)-binding residues include His-479, His-481, Cys-487, His-491, Cys-499, and Cys-501.

This sequence belongs to the arenaviridae GPC protein family. As to quaternary structure, interacts with glycoprotein G2. Part of the GP complex (GP-C) together with glycoprotein G1 and glycoprotein G2. The GP-complex interacts with protein Z, which interacts with ribonucleocapsid; these interactions may induce virion budding. In terms of assembly, homotrimer; disulfide-linked. In pre-fusion state, G1 homotrimers bind G2 homotrimers via ionic interactions. Part of the GP complex (GP-C) together with glycoprotein G2 and the stable signal peptide. The GP-complex interacts with protein Z, which interacts with ribonucleocapsid; these interactions may induce virion budding. Homotrimer. Interacts with the stable signal peptide. In pre-fusion state, G2 homotrimers bind G1 homotrimers via ionic interactions. Part of the GP complex (GP-C) together with glycoprotein G1 and the stable signal peptide. Acidification in the endosome triggers rearrangements, which ultimately leads to a 6 helix bundle formed by the two heptad repeat domains (HR1 and HR2) in post-fusion state. The GP-complex interacts with protein Z, which interacts with ribonucleocapsid; these interactions may induce virion budding. In terms of processing, specific enzymatic cleavages in vivo yield mature proteins. GP-C polyprotein is cleaved in the endoplasmic reticulum by the host protease MBTPS1. Only cleaved glycoprotein is incorporated into virions. The SSP remains stably associated with the GP complex following cleavage by signal peptidase and plays crucial roles in the trafficking of GP through the secretory pathway. Post-translationally, myristoylation is necessary for GP2-mediated fusion activity.

It localises to the virion membrane. Its subcellular location is the host endoplasmic reticulum membrane. It is found in the host Golgi apparatus membrane. The protein resides in the host cell membrane. In terms of biological role, functions as a cleaved signal peptide that is retained as the third component of the GP complex (GP-C). Helps to stabilize the spike complex in its native conformation. The SSP is required for efficient glycoprotein expression, post-translational maturation cleavage of G1 and G2, glycoprotein transport to the cell surface plasma membrane, formation of infectious virus particles, and acid pH-dependent glycoprotein-mediated cell fusion. Functionally, forms the virion spikes together with glycoprotein G2. The glycoprotein spike trimers are connected to the underlying matrix. Mediates virus attachment to host receptor alpha-dystroglycan DAG1. This attachment induces virion internalization predominantly through clathrin- and caveolin-independent endocytosis. Its function is as follows. Forms the virion spikes together with glycoprotein G1. The glycoprotein spike trimers are connected to the underlying matrix. Class I viral fusion protein that directs fusion of viral and host endosomal membranes, leading to delivery of the nucleocapsid into the cytoplasm. Membrane fusion is mediated by irreversible conformational changes induced by acidification. In Bolomys (OLVV), this protein is Pre-glycoprotein polyprotein GP complex.